Here is a 379-residue protein sequence, read N- to C-terminus: RIB43A-like with coiled-coils protein 1 (379 aa).

Residues 1–21 (MYNIKQSTDTKEAAAIEARRN) form a disordered region. A compositionally biased stretch (basic and acidic residues) spans 8–21 (TDTKEAAAIEARRN). 2 coiled-coil regions span residues 82 to 111 (KEEA…GREF) and 216 to 304 (NANK…QAEK).

Belongs to the RIB43A family. Microtubule inner protein component of sperm flagellar doublet microtubules.

It is found in the cytoplasm. Its subcellular location is the cytoskeleton. The protein localises to the flagellum axoneme. This Homo sapiens (Human) protein is RIB43A-like with coiled-coils protein 1 (RIBC1).